We begin with the raw amino-acid sequence, 204 residues long: Large ribosomal subunit protein eL15 (204 aa).

The interval 185-204 is disordered; that stretch reads GGSRRAAWKRKNREHMHRKR. A compositionally biased stretch (basic residues) spans 190-204; that stretch reads AAWKRKNREHMHRKR.

The protein belongs to the eukaryotic ribosomal protein eL15 family.

The polypeptide is Large ribosomal subunit protein eL15 (RpL15) (Drosophila melanogaster (Fruit fly)).